The following is a 779-amino-acid chain: Guanyl-specific ribonuclease pgl-1 (779 aa).

Positions 203-464 (KLLLEGVKEQ…KRIIDALEKS (262 aa)) are involved in dimerization. Histidine 453 (proton acceptor) is an active-site residue. Disordered regions lie at residues 563–596 (HEPQTATLVPPSPNEESMAAESISTDGWDSPTKS), 611–661 (RDAL…GDAT), and 718–779 (GRGG…GGNF). The segment covering 584-595 (SISTDGWDSPTK) has biased composition (polar residues). The span at 612-626 (DALKPDSVNSHRSEE) shows a compositional bias: basic and acidic residues. The tract at residues 699–772 (GGGGGSYGGR…GGDRGGRGGY (74 aa)) is RNA-binding RGG-box.

Homodimer. Interacts with pgl-2 and pgl-3; this association is not required for P-granule localization of either pgl-2 or pgl-3. Interacts with ife-1. Interacts with prmt-1; the interaction is direct. Interacts with nmad-1. Interacts with P granule components meg-1, meg-3 and meg-4. The cofactor is Does not require metal ions for catalytic activity..

The protein localises to the cytoplasmic granule. The catalysed reaction is [RNA] containing guanosine + H2O = an [RNA fragment]-3'-guanosine-3'-phosphate + a 5'-hydroxy-ribonucleotide-3'-[RNA fragment].. In terms of biological role, guanyl-specific endoribonuclease which cleaves the phosphodiester bond in single-stranded RNA between the 3'-guanylic residue and the 5'-OH residue of adjacent nucleotide, resulting in the formation of a corresponding 2',3'-cyclic phosphate intermediate. Essential role in male and female postembryonic germline development; maternally provided protein maintains a population of proliferating germ cells and zygotic expression is required for correct oogenesis. Together with the P-granule component pgl-3, is involved in the formation of P-granules. Together with pgl-3, probably recruits other granule components such as pos-1, mex-3 and glh-1 to P-granules. In addition, may act redundantly with pgl-3 to protect germ cells from excessive germline apoptosis during normal oogenesis and development of the two gonadal arms. This may in part be through regulating the localization of sir-2.1 which is involved in germ cell apoptosis. May protect somatic cells from excessive apoptosis during normal development. The protein is Guanyl-specific ribonuclease pgl-1 of Caenorhabditis remanei (Caenorhabditis vulgaris).